A 185-amino-acid polypeptide reads, in one-letter code: Protein GrpE (185 aa).

The tract at residues 1–37 (MSEEKQTPEQEAEVEAQEEAVQADTEEVTQDEQSAFQ) is disordered.

This sequence belongs to the GrpE family. In terms of assembly, homodimer.

It localises to the cytoplasm. Its function is as follows. Participates actively in the response to hyperosmotic and heat shock by preventing the aggregation of stress-denatured proteins, in association with DnaK and GrpE. It is the nucleotide exchange factor for DnaK and may function as a thermosensor. Unfolded proteins bind initially to DnaJ; upon interaction with the DnaJ-bound protein, DnaK hydrolyzes its bound ATP, resulting in the formation of a stable complex. GrpE releases ADP from DnaK; ATP binding to DnaK triggers the release of the substrate protein, thus completing the reaction cycle. Several rounds of ATP-dependent interactions between DnaJ, DnaK and GrpE are required for fully efficient folding. The chain is Protein GrpE from Bacillus pumilus (strain SAFR-032).